A 347-amino-acid chain; its full sequence is NADH-ubiquinone oxidoreductase chain 2 (347 aa).

11 helical membrane passes run Met1–Met21, His25–Met45, Tyr59–Thr79, Ile96–Pro116, Cys127–Pro147, Ile149–Gly169, Ile178–Pro198, Met200–Ile220, Ile237–Leu257, Ile276–Leu296, and Leu325–Leu345.

The protein belongs to the complex I subunit 2 family. Core subunit of respiratory chain NADH dehydrogenase (Complex I) which is composed of 45 different subunits. Interacts with TMEM242.

The protein resides in the mitochondrion inner membrane. The catalysed reaction is a ubiquinone + NADH + 5 H(+)(in) = a ubiquinol + NAD(+) + 4 H(+)(out). Core subunit of the mitochondrial membrane respiratory chain NADH dehydrogenase (Complex I) which catalyzes electron transfer from NADH through the respiratory chain, using ubiquinone as an electron acceptor. Essential for the catalytic activity and assembly of complex I. In Natalus tumidirostris (Trinidadian funnel-eared bat), this protein is NADH-ubiquinone oxidoreductase chain 2.